The chain runs to 135 residues: Lymphocyte antigen 6B (135 aa).

A signal peptide spans 1–26 (MNRSCAMKSCVLILLLALLCAERAQG). The region spanning 27–119 (LNCYNCTMIP…PTGGSTWTMA (93 aa)) is the UPAR/Ly6 domain. 5 disulfide bridges follow: Cys-29/Cys-54, Cys-32/Cys-41, Cys-47/Cys-75, Cys-79/Cys-99, and Cys-100/Cys-105. Residue Gly-113 is the site of GPI-anchor amidated glycine attachment. Positions 114–135 (STWTMAGVLLFILGSVLLQTLL) are cleaved as a propeptide — removed in mature form.

It localises to the cell membrane. This Rattus norvegicus (Rat) protein is Lymphocyte antigen 6B (Ly6b).